Consider the following 137-residue polypeptide: Small heat shock protein IbpA (137 aa).

Positions 28 to 137 (SQSNGGYPPY…ANKPRRIEIN (110 aa)) constitute a sHSP domain.

The protein belongs to the small heat shock protein (HSP20) family. Monomer. Forms homomultimers of about 100-150 subunits at optimal growth temperatures. Conformation changes to monomers at high temperatures or high ionic concentrations.

It is found in the cytoplasm. Associates with aggregated proteins, together with IbpB, to stabilize and protect them from irreversible denaturation and extensive proteolysis during heat shock and oxidative stress. Aggregated proteins bound to the IbpAB complex are more efficiently refolded and reactivated by the ATP-dependent chaperone systems ClpB and DnaK/DnaJ/GrpE. Its activity is ATP-independent. The polypeptide is Small heat shock protein IbpA (Klebsiella pneumoniae (strain 342)).